The chain runs to 314 residues: tRNA dimethylallyltransferase (314 aa).

13–20 (GPTASGKS) contacts ATP. 15–20 (TASGKS) is a binding site for substrate. 2 interaction with substrate tRNA regions span residues 38-41 (DSMQ) and 161-165 (QRIAR).

It belongs to the IPP transferase family. As to quaternary structure, monomer. Requires Mg(2+) as cofactor.

It carries out the reaction adenosine(37) in tRNA + dimethylallyl diphosphate = N(6)-dimethylallyladenosine(37) in tRNA + diphosphate. Its function is as follows. Catalyzes the transfer of a dimethylallyl group onto the adenine at position 37 in tRNAs that read codons beginning with uridine, leading to the formation of N6-(dimethylallyl)adenosine (i(6)A). The polypeptide is tRNA dimethylallyltransferase (Parvibaculum lavamentivorans (strain DS-1 / DSM 13023 / NCIMB 13966)).